The primary structure comprises 627 residues: 1-deoxy-D-xylulose-5-phosphate synthase (627 aa).

Thiamine diphosphate is bound by residues H80 and 121–123; that span reads GHS. D152 contributes to the Mg(2+) binding site. Thiamine diphosphate is bound by residues 153–154, N181, Y288, and E370; that span reads GA. N181 is a binding site for Mg(2+).

Belongs to the transketolase family. DXPS subfamily. As to quaternary structure, homodimer. The cofactor is Mg(2+). Thiamine diphosphate is required as a cofactor.

The enzyme catalyses D-glyceraldehyde 3-phosphate + pyruvate + H(+) = 1-deoxy-D-xylulose 5-phosphate + CO2. The protein operates within metabolic intermediate biosynthesis; 1-deoxy-D-xylulose 5-phosphate biosynthesis; 1-deoxy-D-xylulose 5-phosphate from D-glyceraldehyde 3-phosphate and pyruvate: step 1/1. In terms of biological role, catalyzes the acyloin condensation reaction between C atoms 2 and 3 of pyruvate and glyceraldehyde 3-phosphate to yield 1-deoxy-D-xylulose-5-phosphate (DXP). The chain is 1-deoxy-D-xylulose-5-phosphate synthase from Vibrio atlanticus (strain LGP32) (Vibrio splendidus (strain Mel32)).